The chain runs to 70 residues: Homeobox protein OTX2 (70 aa).

Residues 34 to 70 (HQLPGPGATLSPMGTNAVTSHLNQSPASLSTQGYGAS) are disordered. A compositionally biased stretch (polar residues) spans 45-70 (PMGTNAVTSHLNQSPASLSTQGYGAS).

This sequence belongs to the paired homeobox family. Bicoid subfamily.

The protein localises to the nucleus. Transcription factor probably involved in the development of the brain and the sense organs. Can bind to the bicoid/BCD target sequence (BTS): 5'-TCTAATCCC-3'. The polypeptide is Homeobox protein OTX2 (Otx2) (Rattus norvegicus (Rat)).